The chain runs to 410 residues: Lipoyl synthase, mitochondrial (410 aa).

Positions 134, 139, 145, 165, 169, 172, and 390 each coordinate [4Fe-4S] cluster. The 232-residue stretch at 148–379 (AGKSTAATAT…AKIGNDLGFL (232 aa)) folds into the Radical SAM core domain.

It belongs to the radical SAM superfamily. Lipoyl synthase family. It depends on [4Fe-4S] cluster as a cofactor.

Its subcellular location is the mitochondrion. It carries out the reaction [[Fe-S] cluster scaffold protein carrying a second [4Fe-4S](2+) cluster] + N(6)-octanoyl-L-lysyl-[protein] + 2 oxidized [2Fe-2S]-[ferredoxin] + 2 S-adenosyl-L-methionine + 4 H(+) = [[Fe-S] cluster scaffold protein] + N(6)-[(R)-dihydrolipoyl]-L-lysyl-[protein] + 4 Fe(3+) + 2 hydrogen sulfide + 2 5'-deoxyadenosine + 2 L-methionine + 2 reduced [2Fe-2S]-[ferredoxin]. The protein operates within protein modification; protein lipoylation via endogenous pathway; protein N(6)-(lipoyl)lysine from octanoyl-[acyl-carrier-protein]: step 2/2. Catalyzes the radical-mediated insertion of two sulfur atoms into the C-6 and C-8 positions of the octanoyl moiety bound to the lipoyl domains of lipoate-dependent enzymes, thereby converting the octanoylated domains into lipoylated derivatives. The sequence is that of Lipoyl synthase, mitochondrial from Schistosoma mansoni (Blood fluke).